A 488-amino-acid polypeptide reads, in one-letter code: Regulatory protein ViaA (488 aa).

Belongs to the ViaA family. As to quaternary structure, homodimer. Interacts with RavA.

It is found in the cytoplasm. Component of the RavA-ViaA chaperone complex, which may act on the membrane to optimize the function of some of the respiratory chains. ViaA stimulates the ATPase activity of RavA. The protein is Regulatory protein ViaA of Yersinia pseudotuberculosis serotype O:1b (strain IP 31758).